Reading from the N-terminus, the 512-residue chain is Cytochrome P450 monooxygenase TwmD (512 aa).

Position 454 (Cys-454) interacts with heme.

The protein belongs to the cytochrome P450 family. Heme serves as cofactor.

It functions in the pathway secondary metabolite biosynthesis. In terms of biological role, cytochrome P450 monooxygenase; part of the gene cluster that mediates the biosynthesis of wortmanamides A and B, reduced long-chain polyketides amidated with a specific omega-amino acid, 5-aminopentanoic acid (5PA). The PKS modules of TwmB are involved in the synthesis of the polyketide backbone, whereas the non-canonical C domain of TwmB is a bonafide condensation domain that specifically selects 5PA and catalyzes amidation to release polyketide chain. The C domain clearly prefers C16 and C18 fatty acyl substrates, which is consistent with simultaneous formation of both octaketide and nonaketide acyl amides wortmanamides A and B. Because TwmB lacks a designated enoylreductase (ER) domain, the required activity is provided the enoyl reductase TwmE. The roles of the remaining enzymes have still to be clarified. The chain is Cytochrome P450 monooxygenase TwmD from Talaromyces wortmannii (Penicillium wortmannii).